The primary structure comprises 381 residues: tRNA pseudouridine synthase Pus10 (381 aa).

Asp-226 serves as the catalytic Nucleophile.

The protein belongs to the pseudouridine synthase Pus10 family.

The enzyme catalyses uridine(54) in tRNA = pseudouridine(54) in tRNA. It carries out the reaction uridine(55) in tRNA = pseudouridine(55) in tRNA. In terms of biological role, responsible for synthesis of pseudouridine from uracil-54 and uracil-55 in the psi GC loop of transfer RNAs. This chain is tRNA pseudouridine synthase Pus10, found in Nitrosopumilus maritimus (strain SCM1).